The primary structure comprises 260 residues: Thiazole synthase (260 aa).

The active-site Schiff-base intermediate with DXP is K102. Residues G163, 189–190 (AG), and 211–212 (NT) contribute to the 1-deoxy-D-xylulose 5-phosphate site.

It belongs to the ThiG family. In terms of assembly, homotetramer. Forms heterodimers with either ThiH or ThiS.

The protein resides in the cytoplasm. It carries out the reaction [ThiS sulfur-carrier protein]-C-terminal-Gly-aminoethanethioate + 2-iminoacetate + 1-deoxy-D-xylulose 5-phosphate = [ThiS sulfur-carrier protein]-C-terminal Gly-Gly + 2-[(2R,5Z)-2-carboxy-4-methylthiazol-5(2H)-ylidene]ethyl phosphate + 2 H2O + H(+). It participates in cofactor biosynthesis; thiamine diphosphate biosynthesis. In terms of biological role, catalyzes the rearrangement of 1-deoxy-D-xylulose 5-phosphate (DXP) to produce the thiazole phosphate moiety of thiamine. Sulfur is provided by the thiocarboxylate moiety of the carrier protein ThiS. In vitro, sulfur can be provided by H(2)S. This is Thiazole synthase from Geobacter sulfurreducens (strain ATCC 51573 / DSM 12127 / PCA).